The primary structure comprises 263 residues: 3-deoxy-manno-octulosonate cytidylyltransferase (263 aa).

This sequence belongs to the KdsB family.

Its subcellular location is the cytoplasm. The catalysed reaction is 3-deoxy-alpha-D-manno-oct-2-ulosonate + CTP = CMP-3-deoxy-beta-D-manno-octulosonate + diphosphate. It functions in the pathway nucleotide-sugar biosynthesis; CMP-3-deoxy-D-manno-octulosonate biosynthesis; CMP-3-deoxy-D-manno-octulosonate from 3-deoxy-D-manno-octulosonate and CTP: step 1/1. Its pathway is bacterial outer membrane biogenesis; lipopolysaccharide biosynthesis. Functionally, activates KDO (a required 8-carbon sugar) for incorporation into bacterial lipopolysaccharide in Gram-negative bacteria. The protein is 3-deoxy-manno-octulosonate cytidylyltransferase of Burkholderia cenocepacia (strain ATCC BAA-245 / DSM 16553 / LMG 16656 / NCTC 13227 / J2315 / CF5610) (Burkholderia cepacia (strain J2315)).